An 85-amino-acid polypeptide reads, in one-letter code: Neurtoxin 10 (85 aa).

An N-terminal signal peptide occupies residues 1-23 (MKFCVAVSLLIIASMAGVISVSG). Positions 24 to 85 (YDVYPRDYAE…NFLSVIWKHC (62 aa)) constitute an LCN-type CS-alpha/beta domain. Intrachain disulfides connect C38–C60, C46–C65, and C50–C67.

This sequence belongs to the long (3 C-C) scorpion toxin superfamily. As to expression, expressed by the venom gland.

It is found in the secreted. The chain is Neurtoxin 10 from Lychas mucronatus (Chinese swimming scorpion).